Consider the following 783-residue polypeptide: BMP/retinoic acid-inducible neural-specific protein 2 (783 aa).

An N-terminal signal peptide occupies residues 1-33 (MRWPCSSRFRGLWPEAAPWAVLLALGVPGWVLA). The MACPF domain maps to 85 to 281 (RYRIYREFAR…FVAAALSYIT (197 aa)). Residues asparagine 185, asparagine 354, asparagine 473, asparagine 579, asparagine 626, and asparagine 658 are each glycosylated (N-linked (GlcNAc...) asparagine).

The protein belongs to the BRINP family. In terms of tissue distribution, expressed in olfactory bulb, cerebellum and neuronal layers in hippocampus.

The protein localises to the secreted. Functionally, inhibits neuronal cell proliferation by negative regulation of the cell cycle transition. The protein is BMP/retinoic acid-inducible neural-specific protein 2 (Brinp2) of Rattus norvegicus (Rat).